A 705-amino-acid chain; its full sequence is Polyribonucleotide nucleotidyltransferase (705 aa).

Residues D486 and D492 each coordinate Mg(2+). Residues 553-612 (PRIYTMKINPEKIKDVIGKGGSVIRALTDETGTTIEIEDDGTIKIAATDGDKAKHAIRRI) form the KH domain. The S1 motif domain occupies 622–690 (GRIYAGKVTR…RQGRIRLSIK (69 aa)).

It belongs to the polyribonucleotide nucleotidyltransferase family. In terms of assembly, component of the RNA degradosome, which is a multiprotein complex involved in RNA processing and mRNA degradation. The cofactor is Mg(2+).

It is found in the cytoplasm. It carries out the reaction RNA(n+1) + phosphate = RNA(n) + a ribonucleoside 5'-diphosphate. In terms of biological role, involved in mRNA degradation. Catalyzes the phosphorolysis of single-stranded polyribonucleotides processively in the 3'- to 5'-direction. The chain is Polyribonucleotide nucleotidyltransferase from Yersinia pseudotuberculosis serotype O:3 (strain YPIII).